The following is a 361-amino-acid chain: Biotin synthase (361 aa).

A Radical SAM core domain is found at 63–290 (NTVQLSTLLS…RAMVRLSAGR (228 aa)). 3 residues coordinate [4Fe-4S] cluster: Cys-78, Cys-82, and Cys-85. [2Fe-2S] cluster-binding residues include Cys-122, Cys-153, Cys-213, and Arg-285.

It belongs to the radical SAM superfamily. Biotin synthase family. As to quaternary structure, homodimer. Requires [4Fe-4S] cluster as cofactor. It depends on [2Fe-2S] cluster as a cofactor.

It carries out the reaction (4R,5S)-dethiobiotin + (sulfur carrier)-SH + 2 reduced [2Fe-2S]-[ferredoxin] + 2 S-adenosyl-L-methionine = (sulfur carrier)-H + biotin + 2 5'-deoxyadenosine + 2 L-methionine + 2 oxidized [2Fe-2S]-[ferredoxin]. The protein operates within cofactor biosynthesis; biotin biosynthesis; biotin from 7,8-diaminononanoate: step 2/2. Its function is as follows. Catalyzes the conversion of dethiobiotin (DTB) to biotin by the insertion of a sulfur atom into dethiobiotin via a radical-based mechanism. This is Biotin synthase from Paraburkholderia phytofirmans (strain DSM 17436 / LMG 22146 / PsJN) (Burkholderia phytofirmans).